The chain runs to 474 residues: Nuclear hormone receptor family member nhr-91 (474 aa).

The tract at residues 50–69 is disordered; sequence SMTPSFSQTESPNSETDDST. A compositionally biased stretch (polar residues) spans 51–69; the sequence is MTPSFSQTESPNSETDDST. Positions 97 to 172 form a DNA-binding region, nuclear receptor; that stretch reads SKLCSVCGDK…KGMLTEAVRE (76 aa). 2 consecutive NR C4-type zinc fingers follow at residues 100–120 and 136–155; these read CSVC…CEGC and CSQD…CQSC. The NR LBD domain maps to 215 to 474; that stretch reads SGKKLIKELV…KNPRRLVFDE (260 aa).

It belongs to the nuclear hormone receptor family.

It is found in the nucleus. Functionally, orphan nuclear receptor. The sequence is that of Nuclear hormone receptor family member nhr-91 (nhr-91) from Caenorhabditis elegans.